The primary structure comprises 433 residues: Trigger factor (433 aa).

A PPIase FKBP-type domain is found at 163–248 (GDVVVLDFAA…VHAVKERRLP (86 aa)).

The protein belongs to the FKBP-type PPIase family. Tig subfamily.

The protein resides in the cytoplasm. The catalysed reaction is [protein]-peptidylproline (omega=180) = [protein]-peptidylproline (omega=0). Involved in protein export. Acts as a chaperone by maintaining the newly synthesized protein in an open conformation. Functions as a peptidyl-prolyl cis-trans isomerase. This is Trigger factor from Nitratidesulfovibrio vulgaris (strain ATCC 29579 / DSM 644 / CCUG 34227 / NCIMB 8303 / VKM B-1760 / Hildenborough) (Desulfovibrio vulgaris).